The sequence spans 86 residues: uncharacterized protein (86 aa).

This is an uncharacterized protein from Schizosaccharomyces pombe (strain 972 / ATCC 24843) (Fission yeast).